Consider the following 293-residue polypeptide: Ribosomal protein L11 methyltransferase (293 aa).

Residues Thr145, Gly166, Asp188, and Asn230 each contribute to the S-adenosyl-L-methionine site.

Belongs to the methyltransferase superfamily. PrmA family.

Its subcellular location is the cytoplasm. It catalyses the reaction L-lysyl-[protein] + 3 S-adenosyl-L-methionine = N(6),N(6),N(6)-trimethyl-L-lysyl-[protein] + 3 S-adenosyl-L-homocysteine + 3 H(+). In terms of biological role, methylates ribosomal protein L11. The sequence is that of Ribosomal protein L11 methyltransferase from Serratia proteamaculans (strain 568).